The primary structure comprises 434 residues: Mannose-6-phosphate isomerase (434 aa).

Zn(2+)-binding residues include Gln-109, His-111, and Glu-136. The span at 181 to 191 (SLGLPTSQPPD) shows a compositional bias: polar residues. Residues 181–200 (SLGLPTSQPPDTSLFKPTES) are disordered. Residue His-291 participates in Zn(2+) binding. Arg-310 is an active-site residue.

It belongs to the mannose-6-phosphate isomerase type 1 family. Zn(2+) serves as cofactor.

The protein resides in the cytoplasm. It catalyses the reaction D-mannose 6-phosphate = D-fructose 6-phosphate. It functions in the pathway nucleotide-sugar biosynthesis; GDP-alpha-D-mannose biosynthesis; alpha-D-mannose 1-phosphate from D-fructose 6-phosphate: step 1/2. In terms of biological role, involved in the synthesis of the GDP-mannose and dolichol-phosphate-mannose required for a number of critical mannosyl transfer reactions. This Cryptococcus neoformans var. neoformans serotype D (strain JEC21 / ATCC MYA-565) (Filobasidiella neoformans) protein is Mannose-6-phosphate isomerase (MAN1).